The sequence spans 402 residues: Acyl-[acyl-carrier-protein] desaturase 3, chloroplastic (402 aa).

Residues 1-32 constitute a chloroplast transit peptide; that stretch reads MSLTGCLPPRPPCSMRRRTSGGGASVSPVVAM. The disordered stretch occupies residues 1–66; sequence MSLTGCLPPR…EVPPQVTHTL (66 aa). 6 residues coordinate Fe cation: E139, E178, H181, E231, E264, and H267.

Belongs to the fatty acid desaturase type 2 family. As to quaternary structure, homodimer. The cofactor is Fe(2+).

The protein localises to the plastid. The protein resides in the chloroplast. The protein operates within lipid metabolism; fatty acid metabolism. Introduces a cis double bond in the acyl chain of an acyl-[acyl-carrier protein]. This is Acyl-[acyl-carrier-protein] desaturase 3, chloroplastic from Oryza sativa subsp. japonica (Rice).